Here is a 261-residue protein sequence, read N- to C-terminus: Proteasome subunit alpha (261 aa).

Positions 242 to 261 (NEENKKEEENREETKEKQEE) are disordered.

It belongs to the peptidase T1A family. In terms of assembly, the 20S proteasome core is composed of 14 alpha and 14 beta subunits that assemble into four stacked heptameric rings, resulting in a barrel-shaped structure. The two inner rings, each composed of seven catalytic beta subunits, are sandwiched by two outer rings, each composed of seven alpha subunits. The catalytic chamber with the active sites is on the inside of the barrel. Has a gated structure, the ends of the cylinder being occluded by the N-termini of the alpha-subunits. Is capped at one or both ends by the proteasome regulatory ATPase, PAN.

It localises to the cytoplasm. The formation of the proteasomal ATPase PAN-20S proteasome complex, via the docking of the C-termini of PAN into the intersubunit pockets in the alpha-rings, triggers opening of the gate for substrate entry. Interconversion between the open-gate and close-gate conformations leads to a dynamic regulation of the 20S proteasome proteolysis activity. Its function is as follows. Component of the proteasome core, a large protease complex with broad specificity involved in protein degradation. The M.jannaschii proteasome is able to cleave oligopeptides after Glu, Asp, Tyr, Phe, Trp, slightly after Arg, but not after Ala. Thus, displays caspase-like and chymotrypsin-like activities and low level of trypsin-like activity. The chain is Proteasome subunit alpha from Methanocaldococcus jannaschii (strain ATCC 43067 / DSM 2661 / JAL-1 / JCM 10045 / NBRC 100440) (Methanococcus jannaschii).